The chain runs to 254 residues: Sensory rhodopsin (254 aa).

Over 1 to 4 the chain is Extracellular; sequence MTGA. The chain crosses the membrane as a helical span at residues 5–26; it reads VTSAYWLAAVAFLIGVGITAAL. The Cytoplasmic portion of the chain corresponds to 27–35; it reads YAKLEGSRA. A helical transmembrane segment spans residues 36–57; that stretch reads RTRLAALAVIPGFAGLSYVGMA. The Extracellular segment spans residues 58 to 71; the sequence is LGIGTVTVNGAELV. A helical membrane pass occupies residues 72-93; the sequence is GLRYVDWVVTTPLLVGFIGYNA. The Cytoplasmic segment spans residues 94 to 96; that stretch reads GAS. A helical membrane pass occupies residues 97–119; the sequence is RRAIAGVMIADALMIVFGAAAVV. At 120–123 the chain is on the extracellular side; it reads SGGT. A helical membrane pass occupies residues 124–151; the sequence is LKWALFGVSALFHVSLFAYLYVIFPGGI. Topologically, residues 152–154 are cytoplasmic; sequence PDD. Residues 155–182 traverse the membrane as a helical segment; sequence PMQRGLFSLLKNHVGLLWLAYPFVWLMG. The Extracellular segment spans residues 183-190; it reads PAGIGFTG. The helical transmembrane segment at 191 to 223 threads the bilayer; that stretch reads AVGAALTYAFLDVLAKVPYVYFFYARRQAFIDV. At Lys206 the chain carries N6-(retinylidene)lysine. Residues 224–254 lie on the Cytoplasmic side of the membrane; the sequence is TDSRAAAKGDGPAVGGEAPVATGDDAPTAAD. The disordered stretch occupies residues 231–254; that stretch reads KGDGPAVGGEAPVATGDDAPTAAD.

The protein belongs to the archaeal/bacterial/fungal opsin family.

Its subcellular location is the cell membrane. Its function is as follows. Involved in the control of phototaxis. This chain is Sensory rhodopsin (sop), found in Halorubrum sodomense.